The sequence spans 518 residues: Probable protein phosphatase 2C 14 (518 aa).

Composition is skewed to low complexity over residues 1-10 (MVEAAAGRRS) and 86-105 (PQRQ…APGA). 2 disordered regions span residues 1-31 (MVEA…QQHQ) and 86-108 (PQRQ…ADGR). In terms of domain architecture, PPM-type phosphatase spans 129–437 (VASLYTLQGK…DDCAVVCLFL (309 aa)). Residues Asp165 and Gly166 each coordinate Mn(2+). Residues 192 to 222 (TDEGRQTSTSSIKSNGDETGSPGNMGRDAEQ) are disordered. Polar residues predominate over residues 197 to 213 (QTSTSSIKSNGDETGSP). Mn(2+)-binding residues include Asp382 and Asp428.

Belongs to the PP2C family. The cofactor is Mg(2+). Mn(2+) serves as cofactor.

It carries out the reaction O-phospho-L-seryl-[protein] + H2O = L-seryl-[protein] + phosphate. The catalysed reaction is O-phospho-L-threonyl-[protein] + H2O = L-threonyl-[protein] + phosphate. This chain is Probable protein phosphatase 2C 14, found in Oryza sativa subsp. japonica (Rice).